The chain runs to 357 residues: Alanine racemase, catabolic (357 aa).

The active-site Proton acceptor; specific for D-alanine is lysine 33. An N6-(pyridoxal phosphate)lysine modification is found at lysine 33. Residue arginine 129 participates in substrate binding. The Proton acceptor; specific for L-alanine role is filled by tyrosine 253. Substrate is bound at residue methionine 301.

It belongs to the alanine racemase family. Requires pyridoxal 5'-phosphate as cofactor.

It carries out the reaction L-alanine = D-alanine. It participates in amino-acid biosynthesis; D-alanine biosynthesis; D-alanine from L-alanine: step 1/1. Isomerizes L-alanine to D-alanine which is then likely oxidized to pyruvate by DadA. Shows racemase activity with both alanine stereoisomers, negligible activity with D-cysteine and L-serine, and exhibits no activity with the remaining natural chiral amino acids. The protein is Alanine racemase, catabolic of Pseudomonas putida (strain ATCC 47054 / DSM 6125 / CFBP 8728 / NCIMB 11950 / KT2440).